Here is a 563-residue protein sequence, read N- to C-terminus: Mitochondrial distribution and morphology protein 34 (563 aa).

The SMP-LTD domain occupies 1–195 (MAFNFNWSPL…LPAIIHRLSL (195 aa)). Disordered stretches follow at residues 298–499 (ERGD…PHTP) and 531–563 (ARRQ…PKAL). Polar residues-rich tracts occupy residues 303 to 332 (AGTT…FSNR) and 346 to 357 (SLVNMNSATTGL). Residues 365 to 383 (SRSHPTRKKKNRVVNLRKP) show a composition bias toward basic residues. Positions 386–407 (TESSESGESETASTTAVSEPTV) are enriched in low complexity. 2 stretches are compositionally biased toward polar residues: residues 458-471 (PSLT…INTQ) and 478-488 (YNQSASTSYTP). Residues 531-540 (ARRQHDDKTA) show a composition bias toward basic and acidic residues.

It belongs to the MDM34 family. Component of the ER-mitochondria encounter structure (ERMES) or MDM complex, composed of MMM1, MDM10, MDM12 and MDM34.

The protein localises to the mitochondrion outer membrane. Functionally, component of the ERMES/MDM complex, which serves as a molecular tether to connect the endoplasmic reticulum (ER) and mitochondria. Components of this complex are involved in the control of mitochondrial shape and protein biogenesis, and function in nonvesicular lipid trafficking between the ER and mitochondria. MDM34 is required for the interaction of the ER-resident membrane protein MMM1 and the outer mitochondrial membrane-resident beta-barrel protein MDM10. This Botryotinia fuckeliana (strain B05.10) (Noble rot fungus) protein is Mitochondrial distribution and morphology protein 34.